A 421-amino-acid polypeptide reads, in one-letter code: Putative zinc finger protein R05D3.3 (421 aa).

2 consecutive C2H2-type zinc fingers follow at residues 207-228 and 234-257; these read VLCV…IEAH and YKCS…RTQH. Positions 400–421 are disordered; it reads GSSITDSNEPGPSEIKKELAEV.

It is found in the nucleus. The polypeptide is Putative zinc finger protein R05D3.3 (Caenorhabditis elegans).